Here is a 131-residue protein sequence, read N- to C-terminus: Proteinase inhibitor (131 aa).

An N-terminal signal peptide occupies residues 1-26; it reads MSASAKLSRMVCLLCGFFSTGISMAS. Residues Cys-51 and Cys-74 are joined by a disulfide bond.

This sequence belongs to the protease inhibitor I38 family.

It localises to the periplasm. Its function is as follows. Inhibitor of the alkaline protease. It forms a non-covalent bond with the protease and may prevent its autocatalytic cleavage in the periplasm. In Pseudomonas aeruginosa (strain ATCC 15692 / DSM 22644 / CIP 104116 / JCM 14847 / LMG 12228 / 1C / PRS 101 / PAO1), this protein is Proteinase inhibitor (inh).